The sequence spans 188 residues: Mitochondrial import inner membrane translocase subunit Tim23B (188 aa).

A run of 2 helical transmembrane segments spans residues 73–93 (FELA…FGAM) and 125–145 (ALWA…GVII).

It belongs to the Tim17/Tim22/Tim23 family.

It is found in the mitochondrion inner membrane. In terms of biological role, may participate in the translocation of transit peptide-containing proteins across the mitochondrial inner membrane. the PAM complex. The polypeptide is Mitochondrial import inner membrane translocase subunit Tim23B (Homo sapiens (Human)).